We begin with the raw amino-acid sequence, 336 residues long: DNA-directed RNA polymerase subunit alpha (336 aa).

Residues 1 to 226 are alpha N-terminal domain (alpha-NTD); it reads MLIAQRPTLS…ELFGLARELN (226 aa). Residues 241–336 are alpha C-terminal domain (alpha-CTD); that stretch reads AALAADMALP…DDAAFSDDEL (96 aa).

This sequence belongs to the RNA polymerase alpha chain family. Homodimer. The RNAP catalytic core consists of 2 alpha, 1 beta, 1 beta' and 1 omega subunit. When a sigma factor is associated with the core the holoenzyme is formed, which can initiate transcription.

It carries out the reaction RNA(n) + a ribonucleoside 5'-triphosphate = RNA(n+1) + diphosphate. DNA-dependent RNA polymerase catalyzes the transcription of DNA into RNA using the four ribonucleoside triphosphates as substrates. This chain is DNA-directed RNA polymerase subunit alpha, found in Paenarthrobacter aurescens (strain TC1).